The primary structure comprises 243 residues: Ribonuclease PH (243 aa).

Phosphate-binding positions include R91 and 129-131 (GTR).

It belongs to the RNase PH family. Homohexameric ring arranged as a trimer of dimers.

It catalyses the reaction tRNA(n+1) + phosphate = tRNA(n) + a ribonucleoside 5'-diphosphate. Phosphorolytic 3'-5' exoribonuclease that plays an important role in tRNA 3'-end maturation. Removes nucleotide residues following the 3'-CCA terminus of tRNAs; can also add nucleotides to the ends of RNA molecules by using nucleoside diphosphates as substrates, but this may not be physiologically important. Probably plays a role in initiation of 16S rRNA degradation (leading to ribosome degradation) during starvation. The polypeptide is Ribonuclease PH (Burkholderia pseudomallei (strain 668)).